A 203-amino-acid polypeptide reads, in one-letter code: ATP-dependent Clp protease proteolytic subunit 2 (203 aa).

Catalysis depends on Ser98, which acts as the Nucleophile. Residue His123 is part of the active site.

The protein belongs to the peptidase S14 family. As to quaternary structure, fourteen ClpP subunits assemble into 2 heptameric rings which stack back to back to give a disk-like structure with a central cavity, resembling the structure of eukaryotic proteasomes.

The protein resides in the cytoplasm. The catalysed reaction is Hydrolysis of proteins to small peptides in the presence of ATP and magnesium. alpha-casein is the usual test substrate. In the absence of ATP, only oligopeptides shorter than five residues are hydrolyzed (such as succinyl-Leu-Tyr-|-NHMec, and Leu-Tyr-Leu-|-Tyr-Trp, in which cleavage of the -Tyr-|-Leu- and -Tyr-|-Trp bonds also occurs).. Cleaves peptides in various proteins in a process that requires ATP hydrolysis. Has a chymotrypsin-like activity. Plays a major role in the degradation of misfolded proteins. The chain is ATP-dependent Clp protease proteolytic subunit 2 from Chlamydia muridarum (strain MoPn / Nigg).